The following is a 478-amino-acid chain: Major facilitator superfamily domain-containing protein 12 (478 aa).

An N-acetylmethionine modification is found at Met1. Topologically, residues 1–26 are cytoplasmic; the sequence is MVPGSPAAGAGPAPRALSLAARLSYA. A helical transmembrane segment spans residues 27–47; it reads VGHFLNDLCASMWFTYLLLYL. The Lumenal segment spans residues 48 to 56; sequence HSVRAYSSR. Residues 57–77 traverse the membrane as a helical segment; that stretch reads GAGLLLLLGQVADGLCTPLVG. Over 78–97 the chain is Cytoplasmic; that stretch reads YEADRAAGRCARCGPRKAWH. The chain crosses the membrane as a helical span at residues 98 to 118; that stretch reads LVGTVCVLLSFPFIFSPCLGC. The Lumenal portion of the chain corresponds to 119–124; the sequence is GAATPE. The helical transmembrane segment at 125–145 threads the bilayer; that stretch reads WAALLYYGPFIVVFQFGWAAT. At 146–168 the chain is on the cytoplasmic side; sequence QIAHLSLIPELVTSDHEKVELTA. Residues 169-189 form a helical membrane-spanning segment; it reads LRYAFTVVANITVFGAAWLLL. The Lumenal portion of the chain corresponds to 190–216; it reads RLQGSAREGPPDEAGDHLGVQDVPVFR. Residues 217–237 traverse the membrane as a helical segment; sequence TLSLCVVGVGAVFSLLFHLGT. Topologically, residues 238–277 are cytoplasmic; sequence RERRRPPAQEPDERSPLLAPATARPLLLWKHWLREPSFYQ. The chain crosses the membrane as a helical span at residues 278-300; that stretch reads VGLLYMSTRLIVNLSQTYIAMYL. Residues 301–308 lie on the Lumenal side of the membrane; the sequence is TYSLNLPK. Residues 309–329 traverse the membrane as a helical segment; that stretch reads KFIATIPLVMYVSGFCSSFLM. Residues 330 to 338 lie on the Cytoplasmic side of the membrane; the sequence is KPVNKCIGR. Residues 339 to 359 form a helical membrane-spanning segment; it reads NMTYFVGLLVILAFAAWVVLV. At 360-361 the chain is on the lumenal side; the sequence is DE. A helical transmembrane segment spans residues 362–382; sequence LGMAVYVAAVLLGGGCATILV. The Cytoplasmic segment spans residues 383–400; the sequence is TSLAMTADLIGPHTHSGA. Residues 401-421 traverse the membrane as a helical segment; sequence FVYGAMSFSDKVANGLAVMVI. At 422–436 the chain is on the lumenal side; sequence QSLHPCSLELCCRAC. A helical membrane pass occupies residues 437–457; the sequence is VGFYHWVMVAVTGGVGVAATL. At 458–478 the chain is on the cytoplasmic side; that stretch reads SLCSLLVWPIRLRSWDPGAQP.

Belongs to the major facilitator superfamily.

It is found in the melanosome membrane. Its subcellular location is the lysosome membrane. The enzyme catalyses L-cysteine(in) = L-cysteine(out). In terms of biological role, transporter that mediates the import of cysteine into melanosomes, thereby regulating skin/hair pigmentation. In melanosomes, cysteine import is required both for normal levels of cystine, the oxidized dimer of cysteine, and provide cysteine for the production of the cysteinyldopas used in pheomelanin synthesis, thereby regulating skin/hair pigmentation. Also catalyzes import of cysteine into lysosomes in non-pigmented cells, regulating lysosomal cystine and cysteine storage, which is essnetial for redox homeostasis. The chain is Major facilitator superfamily domain-containing protein 12 from Equus caballus (Horse).